Consider the following 229-residue polypeptide: UPF0488 protein C8orf33 homolog (229 aa).

A2 is subject to N-acetylalanine. R27 is modified (omega-N-methylarginine). The segment at 55–101 (SRAHPLGDEGGTASKKQNKKKKTRNRASVANGGEKASEKLAPEEVPL) is disordered. Basic residues predominate over residues 70 to 79 (KQNKKKKTRN). S82 is subject to Phosphoserine.

The protein belongs to the UPF0488 family.

This Pongo abelii (Sumatran orangutan) protein is UPF0488 protein C8orf33 homolog.